We begin with the raw amino-acid sequence, 293 residues long: Urease accessory protein UreD (293 aa).

This sequence belongs to the UreD family. As to quaternary structure, ureD, UreF and UreG form a complex that acts as a GTP-hydrolysis-dependent molecular chaperone, activating the urease apoprotein by helping to assemble the nickel containing metallocenter of UreC. The UreE protein probably delivers the nickel.

The protein localises to the cytoplasm. Its function is as follows. Required for maturation of urease via the functional incorporation of the urease nickel metallocenter. This chain is Urease accessory protein UreD, found in Arthrobacter sp. (strain FB24).